The sequence spans 151 residues: Large ribosomal subunit protein uL22 (151 aa).

The protein belongs to the universal ribosomal protein uL22 family. In terms of assembly, part of the 50S ribosomal subunit.

Its function is as follows. This protein binds specifically to 23S rRNA. It makes multiple contacts with different domains of the 23S rRNA in the assembled 50S subunit and ribosome. The globular domain of the protein is located near the polypeptide exit tunnel on the outside of the subunit, while an extended beta-hairpin is found that lines the wall of the exit tunnel in the center of the 70S ribosome. This is Large ribosomal subunit protein uL22 from Thermoplasma acidophilum (strain ATCC 25905 / DSM 1728 / JCM 9062 / NBRC 15155 / AMRC-C165).